The sequence spans 215 residues: Ras-related protein SEC4 (215 aa).

27–34 lines the GTP pocket; sequence GDSGVGKS. Residues 49–57 carry the Effector region motif; that stretch reads FITTIGIDF. GTP is bound by residues 75-79 and 133-136; these read DTAGQ and NKSD. Residues serine 201 and serine 204 each carry the phosphoserine modification. 2 S-geranylgeranyl cysteine lipidation sites follow: cysteine 214 and cysteine 215.

This sequence belongs to the small GTPase superfamily. Rab family. Interacts with the guanyl-nucleotide exchange factor SEC2. Interacts with SRO7, YIF1, YIP3, YIP4 and YIP5.

The protein resides in the cytoplasmic vesicle. It localises to the secretory vesicle membrane. It is found in the cell membrane. The protein localises to the cytoplasm. Its function is as follows. Involved in exocytosis. Maybe by regulating the binding and fusion of secretory vesicles with the cell surface. The GTP-bound form of SEC4 may interact with an effector, thereby stimulating its activity and leading to exocytotic fusion. SEC4 may be an upstream activator of the 19.5S SEC8/SEC15 particle. SEC4 probably interacts directly with SEC8; it could serve as the attachment site for the SEC8/SEC15 particle. The sequence is that of Ras-related protein SEC4 (SEC4) from Saccharomyces cerevisiae (strain ATCC 204508 / S288c) (Baker's yeast).